We begin with the raw amino-acid sequence, 291 residues long: Bis(5'-nucleosyl)-tetraphosphatase, symmetrical (291 aa).

Belongs to the Ap4A hydrolase family.

The enzyme catalyses P(1),P(4)-bis(5'-adenosyl) tetraphosphate + H2O = 2 ADP + 2 H(+). Functionally, hydrolyzes diadenosine 5',5'''-P1,P4-tetraphosphate to yield ADP. The protein is Bis(5'-nucleosyl)-tetraphosphatase, symmetrical of Pseudomonas syringae pv. syringae (strain B728a).